Here is a 997-residue protein sequence, read N- to C-terminus: Disease resistance protein RML1A (997 aa).

Residues 12 to 176 (WRYRVFTSFH…KIARDVSEKL (165 aa)) form the TIR domain. Glu-87 is a catalytic residue. The NB-ARC domain maps to 191–447 (EAHLRKIQSL…HIAIFFNYED (257 aa)). LRR repeat units follow at residues 194–218 (LRKI…GPAG), 534–557 (TSGI…RFLS), 600–623 (AENL…TQLL), 624–647 (TKLK…SNAT), 649–670 (LEML…IKNL), 671–693 (HKLD…NINL), 694–714 (ASLE…PAFS), 715–737 (TKIK…ITHC), 758–781 (PSSL…CIKD), and 783–808 (QRLD…SLRL).

It carries out the reaction NAD(+) + H2O = ADP-D-ribose + nicotinamide + H(+). TIR-NB-LRR receptor-like protein that confers resistance to the pathogen Leptosphaeria maculans (blackleg disease). In Arabidopsis thaliana (Mouse-ear cress), this protein is Disease resistance protein RML1A.